The chain runs to 232 residues: Large ribosomal subunit protein uL1 (232 aa).

The protein belongs to the universal ribosomal protein uL1 family. Part of the 50S ribosomal subunit.

In terms of biological role, binds directly to 23S rRNA. The L1 stalk is quite mobile in the ribosome, and is involved in E site tRNA release. Its function is as follows. Protein L1 is also a translational repressor protein, it controls the translation of the L11 operon by binding to its mRNA. The sequence is that of Large ribosomal subunit protein uL1 from Xanthomonas oryzae pv. oryzae (strain KACC10331 / KXO85).